The following is an 83-amino-acid chain: Kunitz serine protease inhibitor Pr-mulgin 1 (83 aa).

An N-terminal signal peptide occupies residues 1–24; it reads MSSGGLLLLLGLLTLWEVLTPVSS. The region spanning 31-81 is the BPTI/Kunitz inhibitor domain; it reads CELPADPGPCNGLFQAFYYNPVQRKCLKFRYGGCKGNPNTFKTIEECKRTC. Disulfide bonds link cysteine 31-cysteine 81, cysteine 40-cysteine 64, and cysteine 56-cysteine 77.

It belongs to the venom Kunitz-type family. Expressed by the venom gland.

The protein resides in the secreted. Its function is as follows. Specifically inhibits MMP2 activity (EC(50)=100 nM and Ki=60 nM). This Pseudechis rossignolii (Papuan pigmy mulga snake) protein is Kunitz serine protease inhibitor Pr-mulgin 1.